A 205-amino-acid polypeptide reads, in one-letter code: Probable GTP-binding protein EngB (205 aa).

The region spanning 27–201 (QGMEVAFAGR…QNKLNAWFSG (175 aa)) is the EngB-type G domain. GTP-binding positions include 35 to 42 (GRSNAGKS), 62 to 66 (GRTQL), 80 to 83 (DLPG), 147 to 150 (TKVD), and 180 to 182 (FSS). Residues Ser42 and Thr64 each contribute to the Mg(2+) site.

The protein belongs to the TRAFAC class TrmE-Era-EngA-EngB-Septin-like GTPase superfamily. EngB GTPase family. It depends on Mg(2+) as a cofactor.

Its function is as follows. Necessary for normal cell division and for the maintenance of normal septation. The protein is Probable GTP-binding protein EngB of Hamiltonella defensa subsp. Acyrthosiphon pisum (strain 5AT).